The sequence spans 139 residues: Galactoside-binding soluble lectin 13 (139 aa).

In terms of domain architecture, Galectin spans 6 to 138 (VPYKLPVSLS…DISLTSVCVC (133 aa)).

In terms of assembly, homodimer; disulfide-linked. As to expression, detected in adult and fetal spleen, fetal kidney, adult urinary bladder and placenta. Placental expression originates predominantly from the syncytiotrophoblast.

It is found in the cytoplasm. Its subcellular location is the nucleus matrix. Functionally, binds beta-galactoside and lactose. Strong inducer of T-cell apoptosis. Has hemagglutinating activity towards chicken erythrocytes. This is Galactoside-binding soluble lectin 13 (LGALS13) from Homo sapiens (Human).